The following is a 37-amino-acid chain: uncharacterized protein (37 aa).

Residues 1–21 (MQDLEIFLSIFAFIFVFYFGA) traverse the membrane as a helical segment.

It localises to the endoplasmic reticulum membrane. This is an uncharacterized protein from Saccharomyces cerevisiae (strain ATCC 204508 / S288c) (Baker's yeast).